A 669-amino-acid chain; its full sequence is MGANSSTIKELSENEYLKKLSGMDSISENEPFWNQLLSFTLSTPTNSADSKLLEEGTLSICKSLIENNPRTGNLGALIRVFLSRTKELKISAECQNQLFIWQAHNALFIICCLIKVFTSQVSEEELLLHFTYRATDPGNYEADTEDLFEELLFCLIQLIVEIPLLDLTYSILLEAVTALIVLLSYQLFHKDILHESPIHKHLMNGRCLPYTSRLVKTLLYNFIRQEKSPPPGSHIFPQQQDGGGLLYGLASGVASGIWTVLTLGGVGSKPTPQQEQSSPLANQSLLLLLVLSNLTDSPDCPNPFRQSVTFFKNTQDSSVSPTPNPHSFQINFNSLYTSLCEQQKSDQATLLLYTLLHQNSNVRTYVLARSDMENLVLPILEILYHVEERNSHHVYMALIILLILTEDDGFNRSIHEVILKNITWYTERVLTEISLGSLLILVVIRTIQFNMTRTRDKYLHTNCLAALANMSAQFRSLHQYAAQRIISLFSLLSKKHNKVLEQATQSLRGSLGSDESPLPDYAQDLNVIEEVIRMMLEIINSCLTNSLHHNPNMVYALLYKRELFEQFRSHPSFQDIMQNIDMVISFFSLRLEQAGADLSVERVLEVIKQGAVALPKDRLRKFPELKFKYVEEEQPEEFFIPYVWSLVYHSGVGLYWNPQDVQLFTMDSG.

Gly2 carries N-myristoyl glycine lipidation.

This sequence belongs to the dymeclin family. In terms of processing, myristoylated in vitro; myristoylation is not essential for protein targeting to Golgi compartment.

The protein localises to the cytoplasm. It is found in the golgi apparatus. Its function is as follows. Necessary for correct organization of Golgi apparatus. This chain is Dymeclin (dym), found in Xenopus laevis (African clawed frog).